Here is a 256-residue protein sequence, read N- to C-terminus: UPF0259 membrane protein YPO2199/y2042/YP_1997 (256 aa).

The next 6 membrane-spanning stretches (helical) occupy residues 20 to 40 (IAAI…LNQT), 90 to 110 (FSAL…IAMV), 118 to 138 (ALQA…LMFI), 141 to 161 (LVIQ…AIAL), 192 to 212 (LIVP…FLIS), and 221 to 241 (IATI…LVYL).

Belongs to the UPF0259 family.

It is found in the cell inner membrane. This Yersinia pestis protein is UPF0259 membrane protein YPO2199/y2042/YP_1997.